Here is a 259-residue protein sequence, read N- to C-terminus: MATIKEIKELLVTVKELESPIFLELEKDNRSGVQKEISKRKRAIQAELDENLRLESMLSYEKELYKQGLTLIAGIDEVGRGPLAGPVVAAAVILPKNCKIKGLNDSKKIPKKKHLEIFQAVQDQALSIGIGIIDNQVIDQVNIYEATKLAMQEAISQLSPQPEHLLIDAMKLDLPISQTSIIKGDANSLSIAAASIVAKVTRDELMKEYDQQFPGYDFATNAGYGTAKHLEGLTKLGVTPIHRTSFEPVKSLVLGKKES.

The 189-residue stretch at 70–258 (TLIAGIDEVG…VKSLVLGKKE (189 aa)) folds into the RNase H type-2 domain. D76, E77, and D168 together coordinate a divalent metal cation.

Belongs to the RNase HII family. Mn(2+) is required as a cofactor. Requires Mg(2+) as cofactor.

The protein localises to the cytoplasm. It catalyses the reaction Endonucleolytic cleavage to 5'-phosphomonoester.. Functionally, endonuclease that specifically degrades the RNA of RNA-DNA hybrids. This chain is Ribonuclease HII, found in Streptococcus pneumoniae serotype 19F (strain G54).